A 581-amino-acid chain; its full sequence is Putative aluminum-activated malate transporter 3 (581 aa).

Transmembrane regions (helical) follow at residues 98 to 118 (MGLA…GLEL), 122 to 142 (YLWA…ATFS), 148 to 164 (GLGT…MSWI), 167 to 187 (MTGN…AFFA), 201 to 218 (YGFR…VSGY), and 231 to 251 (FLLI…IYPI).

It belongs to the aromatic acid exporter (TC 2.A.85) family.

The protein localises to the membrane. In terms of biological role, malate transporter. In Arabidopsis thaliana (Mouse-ear cress), this protein is Putative aluminum-activated malate transporter 3 (ALMT3).